An 808-amino-acid chain; its full sequence is Phenylalanine--tRNA ligase beta subunit (808 aa).

The tRNA-binding domain maps to 40 to 155 (NQGATGVVVG…DDVEIGSDAL (116 aa)). The 76-residue stretch at 409-484 (IEEPVVSLNL…RLYGYDNIPT (76 aa)) folds into the B5 domain. The Mg(2+) site is built by D462, D468, E471, and E472. One can recognise an FDX-ACB domain in the interval 714-807 (PRFPAISRDI…LEASTGAVLR (94 aa)).

The protein belongs to the phenylalanyl-tRNA synthetase beta subunit family. Type 1 subfamily. Tetramer of two alpha and two beta subunits. It depends on Mg(2+) as a cofactor.

It is found in the cytoplasm. The catalysed reaction is tRNA(Phe) + L-phenylalanine + ATP = L-phenylalanyl-tRNA(Phe) + AMP + diphosphate + H(+). This Halalkalibacterium halodurans (strain ATCC BAA-125 / DSM 18197 / FERM 7344 / JCM 9153 / C-125) (Bacillus halodurans) protein is Phenylalanine--tRNA ligase beta subunit (pheT).